Consider the following 374-residue polypeptide: Lipoyl synthase, mitochondrial (374 aa).

Positions 101, 106, 112, 132, 136, 139, and 347 each coordinate [4Fe-4S] cluster. The 220-residue stretch at 117 to 336 (ENGTQTATIM…EERGNDLGFL (220 aa)) folds into the Radical SAM core domain.

Belongs to the radical SAM superfamily. Lipoyl synthase family. It depends on [4Fe-4S] cluster as a cofactor.

The protein resides in the mitochondrion. The enzyme catalyses [[Fe-S] cluster scaffold protein carrying a second [4Fe-4S](2+) cluster] + N(6)-octanoyl-L-lysyl-[protein] + 2 oxidized [2Fe-2S]-[ferredoxin] + 2 S-adenosyl-L-methionine + 4 H(+) = [[Fe-S] cluster scaffold protein] + N(6)-[(R)-dihydrolipoyl]-L-lysyl-[protein] + 4 Fe(3+) + 2 hydrogen sulfide + 2 5'-deoxyadenosine + 2 L-methionine + 2 reduced [2Fe-2S]-[ferredoxin]. Its pathway is protein modification; protein lipoylation via endogenous pathway; protein N(6)-(lipoyl)lysine from octanoyl-[acyl-carrier-protein]: step 2/2. Its function is as follows. Catalyzes the radical-mediated insertion of two sulfur atoms into the C-6 and C-8 positions of the octanoyl moiety bound to the lipoyl domains of lipoate-dependent enzymes, thereby converting the octanoylated domains into lipoylated derivatives. The polypeptide is Lipoyl synthase, mitochondrial (Drosophila pseudoobscura pseudoobscura (Fruit fly)).